A 299-amino-acid chain; its full sequence is Prohibitin-2 (299 aa).

Position 2 is an N-acetylalanine (Ala-2). The segment at 19-49 is necessary for transcriptional repression; sequence MGTALKLLLGAGAVAYGVRESVFTVEGGHRA. Tyr-128 is modified (phosphotyrosine). Lys-147 bears the N6-acetyllysine mark. Residues 150–174 form a necessary for transcriptional repression region; it reads ASQLITQRAQVSLLIRRELTERAKD. At Ser-151 the chain carries Phosphoserine. Residues 190-238 are a coiled coil; sequence SREYTAAVEAKQVAQQEAQRAQFLVEKAKQEQRQKIVQAEGEAEAAKML. An N6-acetyllysine mark is found at Lys-200, Lys-236, Lys-250, and Lys-262.

It belongs to the prohibitin family. The mitochondrial prohibitin complex consists of two subunits (PHB1 and PHB2), assembled into a membrane-associated ring-shaped supercomplex of approximately 1 mDa. Interacts with ESR1, HDAC1 and HDAC5. Interacts with ZNF703. Interacts with STOML2. Interacts with ARFGEF3. Interacts with SPHK2. Interacts with COX4I1; the interaction associates PHB2 with COX. Interacts with MAP1LC3B (membrane-bound form LC3-II); the interaction is direct and upon mitochondrial depolarization and proteasome-dependent outer membrane rupture. Interacts with IGFBP6 (via C-terminal domain). Interacts with CLPB. Interacts with CD86 (via cytoplasmic domain); the interactions increases after priming with CD40. Interacts with AFG3L2. Interacts with DNAJC19. Interacts with AKT2; this interaction may be important for myogenic differentiation. In terms of processing, phosphorylated. Tyrosine phosphorylation is indirectly stimulated by IGFBP6.

Its subcellular location is the mitochondrion inner membrane. It is found in the cytoplasm. It localises to the nucleus. The protein resides in the cell membrane. Its function is as follows. Protein with pleiotropic attributes mediated in a cell-compartment- and tissue-specific manner, which include the plasma membrane-associated cell signaling functions, mitochondrial chaperone, and transcriptional co-regulator of transcription factors and sex steroid hormones in the nucleus. Functionally, in the mitochondria, together with PHB, forms large ring complexes (prohibitin complexes) in the inner mitochondrial membrane (IMM) and functions as a chaperone protein that stabilizes mitochondrial respiratory enzymes and maintains mitochondrial integrity in the IMM, which is required for mitochondrial morphogenesis, neuronal survival, and normal lifespan. The prohibitin complex, with DNAJC19, regulates cardiolipin remodeling and the protein turnover of OMA1 in a cardiolipin-binding manner. Also regulates cytochrome-c oxidase assembly (COX) and mitochondrial respiration. Binding to sphingoid 1-phosphate (SPP) modulates its regulator activity. Has a key role of mitophagy receptor involved in targeting mitochondria for autophagic degradation. Involved in mitochondrial-mediated antiviral innate immunity, activates RIG-I-mediated signal transduction and production of IFNB1 and pro-inflammatory cytokine IL6. In terms of biological role, in the nucleus, serves as transcriptional co-regulator. Acts as a mediator of transcriptional repression by nuclear hormone receptors via recruitment of histone deacetylases. Functions as an estrogen receptor (ER)-selective coregulator that potentiates the inhibitory activities of antiestrogens and represses the activity of estrogens. Competes with NCOA1 for modulation of ER transcriptional activity. In the plasma membrane, is involved in IGFBP6-induced cell migration. Cooperates with CD86 to mediate CD86-signaling in B lymphocytes that regulates the level of IgG1 produced through the activation of distal signaling intermediates. Upon CD40 engagement, required to activate NF-kappa-B signaling pathway via phospholipase C and protein kinase C activation. The sequence is that of Prohibitin-2 (PHB2) from Pongo abelii (Sumatran orangutan).